Consider the following 142-residue polypeptide: Large ribosomal subunit protein uL22c (142 aa).

Belongs to the universal ribosomal protein uL22 family. As to quaternary structure, part of the 50S ribosomal subunit.

The protein resides in the plastid. Its subcellular location is the chloroplast. This protein binds specifically to 23S rRNA. Its function is as follows. The globular domain of the protein is located near the polypeptide exit tunnel on the outside of the subunit, while an extended beta-hairpin is found that lines the wall of the exit tunnel in the center of the 70S ribosome. In Pinus koraiensis (Korean pine), this protein is Large ribosomal subunit protein uL22c (rpl22).